Consider the following 218-residue polypeptide: Ras-related protein Rab-27B (218 aa).

Residue Thr-2 is modified to N-acetylthreonine. GTP is bound at residue 16–24 (GDSGVGKTT). Positions 38–46 (FITTVGIDF) match the Effector region motif. GTP contacts are provided by residues 74–78 (DTAGQ), 133–136 (NKAD), and 163–165 (SAA). Residues Cys-123 and Cys-188 are joined by a disulfide bond. 2 S-geranylgeranyl cysteine lipidation sites follow: Cys-216 and Cys-218. Cysteine methyl ester is present on Cys-218.

It belongs to the small GTPase superfamily. Rab family. In terms of assembly, interacts with SYTL2, SYTL4, MYRIP and MLPH. Interacts with RPH3A and RPH3A. Interacts (GDP-bound form preferentially) with DENND10.

The protein resides in the membrane. The protein localises to the late endosome. The catalysed reaction is GTP + H2O = GDP + phosphate + H(+). Its activity is regulated as follows. Regulated by guanine nucleotide exchange factors (GEFs) which promote the exchange of bound GDP for free GTP, GTPase activating proteins (GAPs) which increase the GTP hydrolysis activity, and GDP dissociation inhibitors which inhibit the dissociation of the nucleotide from the GTPase. Activated by GEFs such as DENND10. Small GTPase which cycles between active GTP-bound and inactive GDP-bound states. In its active state, binds to a variety of effector proteins to regulate homeostasis of late endocytic pathway, including endosomal positioning, maturation and secretion. Plays a role in NTRK2/TRKB axonal anterograde transport by facilitating the association of NTRK2/TRKB with KLC1. May be involved in targeting uroplakins to urothelial apical membranes. The protein is Ras-related protein Rab-27B (Rab27b) of Rattus norvegicus (Rat).